A 219-amino-acid chain; its full sequence is ER lumen protein-retaining receptor (219 aa).

Residues 1–5 (MNPFR) are Lumenal-facing. The chain crosses the membrane as a helical span at residues 6–26 (ILGDLSHLTSILILIHNIKTT). Over 27 to 37 (RYIEGISFKTQ) the chain is Cytoplasmic. Transmembrane regions (helical) follow at residues 38–58 (TLYA…HWVS) and 59–79 (LYNA…VVLL). The Cytoplasmic portion of the chain corresponds to 80–98 (QGSKRTNTIAYNEMLMHDT). The chain crosses the membrane as a helical span at residues 99 to 116 (FKIQHLLIGSALMSVFFH). At 117-118 (HK) the chain is on the lumenal side. Residues 119 to 139 (FTFLELAWSFSVWLESVAILP) form a helical membrane-spanning segment. The Cytoplasmic portion of the chain corresponds to 140-152 (QLYMLSKGGKTRS). The helical transmembrane segment at 153–173 (LTVHYIFAMGLYRALYIPNWI) threads the bilayer. The Lumenal portion of the chain corresponds to 174-185 (WRYSTEDKKLDK). The chain crosses the membrane as a helical span at residues 186–206 (IAFFAGLLQTLLYSDFFYIYY). The Cytoplasmic portion of the chain corresponds to 207–219 (TKVIRGKGFKLPK).

It belongs to the ERD2 family.

It is found in the endoplasmic reticulum membrane. Required for the retention of luminal endoplasmic reticulum proteins. Determines the specificity of the luminal ER protein retention system. Also required for normal vesicular traffic through the Golgi. This receptor strongly recognizes H-D-E-L and weakly recognizes D-D-E-L and K-D-E-L. This chain is ER lumen protein-retaining receptor, found in Saccharomyces cerevisiae (strain ATCC 204508 / S288c) (Baker's yeast).